A 121-amino-acid polypeptide reads, in one-letter code: Two-component response regulator ORR8 (121 aa).

Residues 5 to 121 (HVLVVDDTHV…VDVPRIMKYI (117 aa)) form the Response regulatory domain. D55 is subject to 4-aspartylphosphate.

It belongs to the ARR family. Type-A subfamily. Post-translationally, two-component system major event consists of a His-to-Asp phosphorelay between a sensor histidine kinase (HK) and a response regulator (RR). In plants, the His-to-Asp phosphorelay involves an additional intermediate named Histidine-containing phosphotransfer protein (HPt). This multistep phosphorelay consists of a His-Asp-His-Asp sequential transfer of a phosphate group between first a His and an Asp of the HK protein, followed by the transfer to a conserved His of the HPt protein and finally the transfer to an Asp in the receiver domain of the RR protein. In terms of tissue distribution, expressed in mature leaves, and at low levels in roots, shoots and flowers.

Functionally, functions as a response regulator involved in His-to-Asp phosphorelay signal transduction system. Phosphorylation of the Asp residue in the receiver domain activates the ability of the protein to promote the transcription of target genes. Type-A response regulators seem to act as negative regulators of the cytokinin signaling. The protein is Two-component response regulator ORR8 of Oryza sativa subsp. indica (Rice).